The sequence spans 96 residues: Large ribosomal subunit protein bL27 (96 aa).

Positions 1–9 (MLRLDLQFF) are excised as a propeptide. Positions 13 to 35 (KGVGSTKNGRDSQSKRLGAKRAD) are disordered.

This sequence belongs to the bacterial ribosomal protein bL27 family. Post-translationally, the N-terminus is cleaved by ribosomal processing cysteine protease Prp.

The polypeptide is Large ribosomal subunit protein bL27 (Bacillus cereus (strain B4264)).